A 352-amino-acid polypeptide reads, in one-letter code: Rhodopsin, freshwater form (352 aa).

The Extracellular segment spans residues 1–36; it reads MNGTEGPNFYVPMSNVTGVVRSPFEYPQYYLAEPWA. Residues N2 and N15 are each glycosylated (N-linked (GlcNAc...) asparagine). A helical membrane pass occupies residues 37-61; the sequence is YSALAAYMFFLIIAGFPINFLTLYV. Residues 62-73 lie on the Cytoplasmic side of the membrane; the sequence is TIEHKKLRTPLN. Residues 74-98 form a helical membrane-spanning segment; that stretch reads YILLNLAVADLFMVFGGFTTTMYTS. The Extracellular portion of the chain corresponds to 99-113; it reads MHGYFVFGPTGCNIE. A disulfide bridge connects residues C110 and C187. A helical membrane pass occupies residues 114–133; it reads GFFATLGGEIALWCLVVLAV. Over 134 to 152 the chain is Cytoplasmic; that stretch reads ERWMVVCKPMSNFRFGENH. Residues 153–176 form a helical membrane-spanning segment; the sequence is AIMGVAFTWVMALACAAPPLFGWS. Over 177 to 202 the chain is Extracellular; sequence RYIPEGMQCSCGMDHYAPNPETYNES. N-linked (GlcNAc...) asparagine glycosylation occurs at N200. A helical transmembrane segment spans residues 203 to 230; it reads FVIYMFICHFTIPLTVISFCYGRLVCTV. At 231-252 the chain is on the cytoplasmic side; the sequence is KEATAQQQESETTQRAEREVTR. The helical transmembrane segment at 253–276 threads the bilayer; the sequence is MVIIMVISFLVCWVPYASVAWYIF. The Extracellular portion of the chain corresponds to 277–284; it reads THQGSSFG. Residues 285 to 309 form a helical membrane-spanning segment; it reads PIFMTIPAFFAKSSSLYNPLIYICM. K296 carries the N6-(retinylidene)lysine modification. The Cytoplasmic portion of the chain corresponds to 310–352; sequence NKQSRNCMITTLCCGKNPFEEEEGASTTASKTEASSVSSVSPA. Residue C323 is the site of S-palmitoyl cysteine attachment. Residues 330 to 352 are disordered; that stretch reads EEEGASTTASKTEASSVSSVSPA. Low complexity predominate over residues 334-352; it reads ASTTASKTEASSVSSVSPA.

The protein belongs to the G-protein coupled receptor 1 family. Opsin subfamily. In terms of processing, phosphorylated on some or all of the serine and threonine residues present in the C-terminal region. Rod shaped photoreceptor cells which mediates vision in dim light.

The protein localises to the membrane. Visual pigments such as rhodopsin and porphyropsin are light-absorbing molecules that mediate vision. Rhodopsin consists of an apoprotein, opsin, covalently linked to 11-cis-retinal. This receptor is coupled to the activation of phospholipase C. Porphyropsin consists of opsin covalently linked to 11-cis 3,4-didehydroretinal. The chain is Rhodopsin, freshwater form from Anguilla anguilla (European freshwater eel).